Reading from the N-terminus, the 403-residue chain is Spindle assembly abnormal protein 5 (403 aa).

Disordered stretches follow at residues proline 24 to alanine 79 and threonine 96 to arginine 127. Positions arginine 116–arginine 127 are enriched in basic and acidic residues. Residues aspartate 128 to methionine 163 adopt a coiled-coil conformation. Disordered regions lie at residues alanine 174–isoleucine 205, alanine 255–asparagine 276, arginine 302–glutamine 325, and tyrosine 355–lysine 403. Positions serine 177–arginine 194 are enriched in basic and acidic residues. A compositionally biased stretch (basic and acidic residues) spans threonine 305 to glutamate 321. Residues valine 360–glutamate 369 are compositionally biased toward acidic residues. Over residues tyrosine 379–lysine 403 the composition is skewed to basic and acidic residues.

Interacts with sas-6 via its coiled coil domain.

The protein resides in the cytoplasm. The protein localises to the cytoskeleton. Its subcellular location is the microtubule organizing center. It is found in the centrosome. It localises to the centriole. Functionally, required for centrosome duplication. Essential for daughter-centriole formation. Requires both maternal and partenal expression, suggesting that it regulates centriole duplication during both spermatogenesis and early embryogenesis. The polypeptide is Spindle assembly abnormal protein 5 (sas-5) (Caenorhabditis briggsae).